Here is a 162-residue protein sequence, read N- to C-terminus: Ribosomal RNA large subunit methyltransferase H (162 aa).

S-adenosyl-L-methionine is bound by residues L78, G109, and 128-133; that span reads LSPLTL.

This sequence belongs to the RNA methyltransferase RlmH family. In terms of assembly, homodimer.

It localises to the cytoplasm. It catalyses the reaction pseudouridine(1915) in 23S rRNA + S-adenosyl-L-methionine = N(3)-methylpseudouridine(1915) in 23S rRNA + S-adenosyl-L-homocysteine + H(+). Functionally, specifically methylates the pseudouridine at position 1915 (m3Psi1915) in 23S rRNA. This Psychrobacter sp. (strain PRwf-1) protein is Ribosomal RNA large subunit methyltransferase H.